The sequence spans 65 residues: Large ribosomal subunit protein bL35 (65 aa).

Residues 1-16 (MPKMKTKSSAKKRFKV) show a composition bias toward basic residues. A disordered region spans residues 1 to 26 (MPKMKTKSSAKKRFKVRSSGGIKRSQ).

The protein belongs to the bacterial ribosomal protein bL35 family.

This chain is Large ribosomal subunit protein bL35, found in Azoarcus sp. (strain BH72).